The chain runs to 184 residues: UPF0398 protein BALH_1408 (184 aa).

The protein belongs to the UPF0398 family.

The protein is UPF0398 protein BALH_1408 of Bacillus thuringiensis (strain Al Hakam).